The chain runs to 100 residues: C-X-C motif chemokine 2 (100 aa).

The signal sequence occupies residues 1–27 (MAPPTCRLLSAALVLLLLLATNHQATG). Intrachain disulfides connect Cys-36–Cys-62 and Cys-38–Cys-78.

Belongs to the intercrine alpha (chemokine CxC) family. Homotetramer.

Its subcellular location is the secreted. Chemotactic for human polymorphonuclear leukocytes but does not induce chemokinesis or an oxidative burst. This chain is C-X-C motif chemokine 2 (Cxcl2), found in Mus musculus (Mouse).